We begin with the raw amino-acid sequence, 720 residues long: Polyribonucleotide nucleotidyltransferase (720 aa).

Residues Asp-487 and Asp-493 each coordinate Mg(2+). A KH domain is found at 554–613 (PRIETFKIPTDKIREVIGTGGKVIREIVEKTGAKINIEDDGTVKVASNDGEAMKAAIKWI). The S1 motif domain maps to 623 to 691 (GQIYEGTVVK…DRGKTRLSMK (69 aa)). The segment at 691–720 (KAVDQQTGEDLEAAGHKAEKADAPREAAGE) is disordered. The span at 703-720 (AAGHKAEKADAPREAAGE) shows a compositional bias: basic and acidic residues.

It belongs to the polyribonucleotide nucleotidyltransferase family. It depends on Mg(2+) as a cofactor.

The protein localises to the cytoplasm. It carries out the reaction RNA(n+1) + phosphate = RNA(n) + a ribonucleoside 5'-diphosphate. Its function is as follows. Involved in mRNA degradation. Catalyzes the phosphorolysis of single-stranded polyribonucleotides processively in the 3'- to 5'-direction. This chain is Polyribonucleotide nucleotidyltransferase, found in Nitrobacter hamburgensis (strain DSM 10229 / NCIMB 13809 / X14).